The sequence spans 157 residues: 2-C-methyl-D-erythritol 2,4-cyclodiphosphate synthase (157 aa).

The a divalent metal cation site is built by Asp8 and His10. Residues 8–10 and 34–35 each bind 4-CDP-2-C-methyl-D-erythritol 2-phosphate; these read DVH and HS. Position 42 (His42) interacts with a divalent metal cation. Residues 56 to 58, 61 to 65, 100 to 106, 132 to 135, Phe139, and Arg142 contribute to the 4-CDP-2-C-methyl-D-erythritol 2-phosphate site; these read DIG, FPDTD, AQAPKMA, and TTEE.

The protein belongs to the IspF family. In terms of assembly, homotrimer. It depends on a divalent metal cation as a cofactor.

The enzyme catalyses 4-CDP-2-C-methyl-D-erythritol 2-phosphate = 2-C-methyl-D-erythritol 2,4-cyclic diphosphate + CMP. Its pathway is isoprenoid biosynthesis; isopentenyl diphosphate biosynthesis via DXP pathway; isopentenyl diphosphate from 1-deoxy-D-xylulose 5-phosphate: step 4/6. Its function is as follows. Involved in the biosynthesis of isopentenyl diphosphate (IPP) and dimethylallyl diphosphate (DMAPP), two major building blocks of isoprenoid compounds. Catalyzes the conversion of 4-diphosphocytidyl-2-C-methyl-D-erythritol 2-phosphate (CDP-ME2P) to 2-C-methyl-D-erythritol 2,4-cyclodiphosphate (ME-CPP) with a corresponding release of cytidine 5-monophosphate (CMP). This Pseudomonas entomophila (strain L48) protein is 2-C-methyl-D-erythritol 2,4-cyclodiphosphate synthase.